The sequence spans 78 residues: Antitoxin FitA (78 aa).

As to quaternary structure, homodimer in the absence of FitB; forms a heterodimer with FitB; 4 FitAB heterodimers form a complex that binds to fitAB promoter DNA. The complex is also seen in solution.

Antitoxin component of a type II toxin-antitoxin (TA) system. Plays a role in the speed with which bacteria traverse human epithelial cells; disruption of the locus increases the speed of trafficking about 2-4-fold. Binds to its own promoter, binding affinity of the FitAB complex is 20-30-fold higher than FitA alone. No nuclease activity was observed for the FitAB complex, perhaps because FitA (the antitoxin) prevents metal binding and thus catalysis by FitB. This chain is Antitoxin FitA (fitA), found in Neisseria gonorrhoeae (strain ATCC 700825 / FA 1090).